Consider the following 176-residue polypeptide: Probable DNA-directed RNA polymerase subunit delta (176 aa).

Residues 14–81 (LSLIDVAHFI…GNNMWGLRAW (68 aa)) form the HTH HARE-type domain. Disordered regions lie at residues 91-119 (VQTQTTPKKKRKSDDDDDEEILDDDVDYD) and 140-176 (DEDEDEDDHLPDGIEGDLATVEDDYTDGDYTEDPEDK). 2 stretches are compositionally biased toward acidic residues: residues 105 to 119 (DDDDEEILDDDVDYD) and 159 to 176 (TVEDDYTDGDYTEDPEDK).

It belongs to the RpoE family. RNAP is composed of a core of 2 alpha, a beta and a beta' subunits. The core is associated with a delta subunit and one of several sigma factors.

Participates in both the initiation and recycling phases of transcription. In the presence of the delta subunit, RNAP displays an increased specificity of transcription, a decreased affinity for nucleic acids, and an increased efficiency of RNA synthesis because of enhanced recycling. The chain is Probable DNA-directed RNA polymerase subunit delta from Listeria welshimeri serovar 6b (strain ATCC 35897 / DSM 20650 / CCUG 15529 / CIP 8149 / NCTC 11857 / SLCC 5334 / V8).